The following is a 424-amino-acid chain: Ankyrin repeat domain-containing protein 61 (424 aa).

ANK repeat units lie at residues 80–109, 113–169, 172–201, 205–234, 239–278, 282–311, and 315–348; these read LSFLPIHLAAKYRKAQSLLCLLEHGADPEA, QGFT…ARVD, HRHCPLHLATIYGTHLVLSILAQNGAQVNA, SSMTPLHMAADILNKEMMQTLIAWGASVNC, TGNTALKLAVSTASSKAGRLLAAGLGCIRLLLVHGAQVNA, DGQAAIHEACFGGREVIINLLLEFEANVNI, and NGESPIHMYLQRGSNIRDTALLARLLFRSYPLRL.

The chain is Ankyrin repeat domain-containing protein 61 (ANKRD61) from Bos taurus (Bovine).